Reading from the N-terminus, the 320-residue chain is tRNA U34 carboxymethyltransferase (320 aa).

Residues Lys89, Trp103, Lys108, Gly128, 150–152, 179–180, Met194, Tyr198, and Arg313 contribute to the carboxy-S-adenosyl-L-methionine site; these read DPT and IE.

It belongs to the class I-like SAM-binding methyltransferase superfamily. CmoB family. Homotetramer.

It carries out the reaction carboxy-S-adenosyl-L-methionine + 5-hydroxyuridine(34) in tRNA = 5-carboxymethoxyuridine(34) in tRNA + S-adenosyl-L-homocysteine + H(+). Its function is as follows. Catalyzes carboxymethyl transfer from carboxy-S-adenosyl-L-methionine (Cx-SAM) to 5-hydroxyuridine (ho5U) to form 5-carboxymethoxyuridine (cmo5U) at position 34 in tRNAs. The sequence is that of tRNA U34 carboxymethyltransferase from Actinobacillus pleuropneumoniae serotype 7 (strain AP76).